We begin with the raw amino-acid sequence, 373 residues long: Probable dual-specificity RNA methyltransferase RlmN (373 aa).

Glutamate 111 functions as the Proton acceptor in the catalytic mechanism. One can recognise a Radical SAM core domain in the interval 117 to 356 (GPGRLTACLS…LRKSYGTSIH (240 aa)). Cysteine 124 and cysteine 359 form a disulfide bridge. Residues cysteine 131, cysteine 135, and cysteine 138 each contribute to the [4Fe-4S] cluster site. S-adenosyl-L-methionine-binding positions include 183 to 184 (GE), serine 216, 239 to 241 (SLH), and asparagine 316. The S-methylcysteine intermediate role is filled by cysteine 359.

It belongs to the radical SAM superfamily. RlmN family. [4Fe-4S] cluster is required as a cofactor.

The protein resides in the cytoplasm. The catalysed reaction is adenosine(2503) in 23S rRNA + 2 reduced [2Fe-2S]-[ferredoxin] + 2 S-adenosyl-L-methionine = 2-methyladenosine(2503) in 23S rRNA + 5'-deoxyadenosine + L-methionine + 2 oxidized [2Fe-2S]-[ferredoxin] + S-adenosyl-L-homocysteine. It carries out the reaction adenosine(37) in tRNA + 2 reduced [2Fe-2S]-[ferredoxin] + 2 S-adenosyl-L-methionine = 2-methyladenosine(37) in tRNA + 5'-deoxyadenosine + L-methionine + 2 oxidized [2Fe-2S]-[ferredoxin] + S-adenosyl-L-homocysteine. In terms of biological role, specifically methylates position 2 of adenine 2503 in 23S rRNA and position 2 of adenine 37 in tRNAs. The polypeptide is Probable dual-specificity RNA methyltransferase RlmN (Chlorobium phaeovibrioides (strain DSM 265 / 1930) (Prosthecochloris vibrioformis (strain DSM 265))).